The primary structure comprises 297 residues: Glycerol-3-phosphate dehydrogenase [NAD(P)+] (297 aa).

NADPH-binding residues include Trp11, Arg33, and Lys79. Sn-glycerol 3-phosphate is bound by residues Lys79, Gly107, and Ser109. Residue Ala111 participates in NADPH binding. Positions 161, 214, 224, 225, and 226 each coordinate sn-glycerol 3-phosphate. The active-site Proton acceptor is the Lys161. An NADPH-binding site is contributed by Arg225. 2 residues coordinate NADPH: Val249 and Glu251.

This sequence belongs to the NAD-dependent glycerol-3-phosphate dehydrogenase family.

The protein resides in the cytoplasm. The catalysed reaction is sn-glycerol 3-phosphate + NAD(+) = dihydroxyacetone phosphate + NADH + H(+). It catalyses the reaction sn-glycerol 3-phosphate + NADP(+) = dihydroxyacetone phosphate + NADPH + H(+). It functions in the pathway membrane lipid metabolism; glycerophospholipid metabolism. Functionally, catalyzes the reduction of the glycolytic intermediate dihydroxyacetone phosphate (DHAP) to sn-glycerol 3-phosphate (G3P), the key precursor for phospholipid synthesis. In Campylobacter jejuni subsp. jejuni serotype O:2 (strain ATCC 700819 / NCTC 11168), this protein is Glycerol-3-phosphate dehydrogenase [NAD(P)+].